The chain runs to 115 residues: UPF0102 protein NMA0341 (115 aa).

Belongs to the UPF0102 family.

The sequence is that of UPF0102 protein NMA0341 from Neisseria meningitidis serogroup A / serotype 4A (strain DSM 15465 / Z2491).